Here is a 410-residue protein sequence, read N- to C-terminus: Cysteine desulfurase IscS (410 aa).

Pyridoxal 5'-phosphate contacts are provided by residues 80–81 (AT), Asn-160, Gln-188, and 208–210 (SGH). Lys-211 carries the N6-(pyridoxal phosphate)lysine modification. Thr-248 contacts pyridoxal 5'-phosphate. The active-site Cysteine persulfide intermediate is Cys-334. Residue Cys-334 participates in [2Fe-2S] cluster binding.

The protein belongs to the class-V pyridoxal-phosphate-dependent aminotransferase family. NifS/IscS subfamily. In terms of assembly, homodimer. Forms a heterotetramer with IscU, interacts with other sulfur acceptors. Pyridoxal 5'-phosphate is required as a cofactor.

The protein localises to the cytoplasm. It catalyses the reaction (sulfur carrier)-H + L-cysteine = (sulfur carrier)-SH + L-alanine. It functions in the pathway cofactor biosynthesis; iron-sulfur cluster biosynthesis. Its function is as follows. Master enzyme that delivers sulfur to a number of partners involved in Fe-S cluster assembly, tRNA modification or cofactor biosynthesis. Catalyzes the removal of elemental sulfur atoms from cysteine to produce alanine. Functions as a sulfur delivery protein for Fe-S cluster synthesis onto IscU, an Fe-S scaffold assembly protein, as well as other S acceptor proteins. This Rickettsia conorii (strain ATCC VR-613 / Malish 7) protein is Cysteine desulfurase IscS.